The following is a 958-amino-acid chain: MTAREEPATTFARRHIGPSSRDIAAMLETVGAKSLAALMNEALPPSIRQAAPLDLGQGLSEGLSETEALAHMQSLAAQNQAFTSLIGQGYSGTILPAVIQRNILENPAWYTAYTPYQPEISQGRLEALFNFQTMICDLTGLDVANASLLDEATAVAEAMALAERASSVKTKAFFVDHEVHPQTLAVLRTRAEPLGWTLVTGDPLRDLDKADVFGAVLQYPGTSGVVRDLRPAISTLKAKGGLAVVAADLLALTLLASPGVLGADIAVGSAQRFGVPMGYGGPHAAYMAVRDTLKRLLPGRIVGLSVDSRGAPAYRLALQTREQHIRREKATSNICTAQVLLAVISSMYAVYHGPEGLAQIARTVHRRTATLAAGLTRLGFAPLNDAAFDTLTVSVGDRQNEIAGRALSQGINLRINADHTLGIALDELTTPEIVEAVWRTFGAAFSYADVEAHAPDLLPADLGRRTAYLTHPVFHAHRSETELLRYMRKLSDRDLALDRAMIPLGSCTMKLNATTEMIPLTWPAFAGLHPFAPCEQAEGYYALFEEFEQWLIDITGYDAISLQPNSGAQGEYAGLLAIRGYHAARGDSHRTVCLIPSSAHGTNPASANMAGMEVVVVACDARGDVDVDDLRAKAAQHADRLAAIMITYPSTHGVFEERIREICDIVHSHGGQVYLDGANMNAQVGLSRPGDYGADVSHLNLHKTFCIPHGGGGPGMGPIGVKAHLASFLPGHPATDGATPPAVGAVSAAPFGSASILTISYIYVLMMGGEGLTRATEVAILNANYVAQRLDPHFPVLYRNVKGRVAHECIIDPRALKAETGVTVDDIAKRLIDYGFHAPTMSFPVPGTLMIEPTESESKAELDRFCDAMIAIRREIAEIEAGRWSVEASPLRHAPHTVHDIADDTWSRPYSRAQGCFPAGTSRLDKYWCPVGRVDNAYGDRNLVCSCPPMEDYAQAAE.

N6-(pyridoxal phosphate)lysine is present on Lys-703.

The protein belongs to the GcvP family. The glycine cleavage system is composed of four proteins: P, T, L and H. The cofactor is pyridoxal 5'-phosphate.

It carries out the reaction N(6)-[(R)-lipoyl]-L-lysyl-[glycine-cleavage complex H protein] + glycine + H(+) = N(6)-[(R)-S(8)-aminomethyldihydrolipoyl]-L-lysyl-[glycine-cleavage complex H protein] + CO2. Functionally, the glycine cleavage system catalyzes the degradation of glycine. The P protein binds the alpha-amino group of glycine through its pyridoxal phosphate cofactor; CO(2) is released and the remaining methylamine moiety is then transferred to the lipoamide cofactor of the H protein. The protein is Glycine dehydrogenase (decarboxylating) of Nitrobacter hamburgensis (strain DSM 10229 / NCIMB 13809 / X14).